Reading from the N-terminus, the 178-residue chain is Large ribosomal subunit protein uL6 (178 aa).

It belongs to the universal ribosomal protein uL6 family. In terms of assembly, part of the 50S ribosomal subunit.

This protein binds to the 23S rRNA, and is important in its secondary structure. It is located near the subunit interface in the base of the L7/L12 stalk, and near the tRNA binding site of the peptidyltransferase center. The chain is Large ribosomal subunit protein uL6 from Nitratiruptor sp. (strain SB155-2).